The chain runs to 95 residues: Aspartyl/glutamyl-tRNA(Asn/Gln) amidotransferase subunit C (95 aa).

Belongs to the GatC family. In terms of assembly, heterotrimer of A, B and C subunits.

It catalyses the reaction L-glutamyl-tRNA(Gln) + L-glutamine + ATP + H2O = L-glutaminyl-tRNA(Gln) + L-glutamate + ADP + phosphate + H(+). It carries out the reaction L-aspartyl-tRNA(Asn) + L-glutamine + ATP + H2O = L-asparaginyl-tRNA(Asn) + L-glutamate + ADP + phosphate + 2 H(+). Allows the formation of correctly charged Asn-tRNA(Asn) or Gln-tRNA(Gln) through the transamidation of misacylated Asp-tRNA(Asn) or Glu-tRNA(Gln) in organisms which lack either or both of asparaginyl-tRNA or glutaminyl-tRNA synthetases. The reaction takes place in the presence of glutamine and ATP through an activated phospho-Asp-tRNA(Asn) or phospho-Glu-tRNA(Gln). The chain is Aspartyl/glutamyl-tRNA(Asn/Gln) amidotransferase subunit C from Ruthia magnifica subsp. Calyptogena magnifica.